A 182-amino-acid chain; its full sequence is Ribosome maturation factor RimM (182 aa).

The PRC barrel domain occupies V101–Y182.

It belongs to the RimM family. As to quaternary structure, binds ribosomal protein uS19.

It is found in the cytoplasm. In terms of biological role, an accessory protein needed during the final step in the assembly of 30S ribosomal subunit, possibly for assembly of the head region. Essential for efficient processing of 16S rRNA. May be needed both before and after RbfA during the maturation of 16S rRNA. It has affinity for free ribosomal 30S subunits but not for 70S ribosomes. The protein is Ribosome maturation factor RimM of Acinetobacter baylyi (strain ATCC 33305 / BD413 / ADP1).